The primary structure comprises 50 residues: U-megalopygitoxin(9)-Mo13 (50 aa).

The first 23 residues, 1 to 23 (MKLVFLFFIVAVMVSLFVGMTEA), serve as a signal peptide directing secretion. Cysteines 33 and 40 form a disulfide.

Belongs to the caterpillar 9 family. In terms of tissue distribution, expressed by the venom apparatus.

It localises to the secreted. Functionally, probable toxin. The polypeptide is U-megalopygitoxin(9)-Mo13 (Megalopyge opercularis (Southern flannel moth)).